The primary structure comprises 1469 residues: Regulation of nuclear pre-mRNA domain-containing protein 2 (1469 aa).

Ala-2 bears the N-acetylalanine mark. The residue at position 16 (Ser-16) is a Phosphoserine. The 131-residue stretch at Ser-19–Ala-149 folds into the CID domain. 2 disordered regions span residues Ser-329–Pro-445 and Thr-489–Asn-524. A compositionally biased stretch (basic and acidic residues) spans Glu-370–Val-386. Ser-374 bears the Phosphoserine mark. At Thr-376 the chain carries Phosphothreonine. Positions Glu-387 to Asp-396 are enriched in acidic residues. Ser-392 is modified (phosphoserine). Positions Asp-397–Glu-412 are enriched in basic and acidic residues. The span at Gly-419–Lys-430 shows a compositional bias: polar residues. Residues Cys-434 to Pro-445 show a composition bias toward pro residues. Ser-492, Ser-495, Ser-498, and Ser-504 each carry phosphoserine. At Thr-536 the chain carries Phosphothreonine. Residues Ala-572–Gly-594 are disordered. Low complexity predominate over residues Thr-576–Ala-591. A phosphoserine mark is found at Ser-583 and Ser-612. Position 617 is a phosphothreonine (Thr-617). Ser-633 carries the phosphoserine modification. The segment covering Ser-647–Pro-656 has biased composition (polar residues). 7 disordered regions span residues Ser-647–Ser-686, Ser-716–Asn-867, Ser-919–Glu-1013, Lys-1033–Glu-1140, Ser-1154–Thr-1183, Phe-1204–Pro-1328, and Gly-1368–Ala-1414. 4 positions are modified to phosphoserine: Ser-682, Ser-684, Ser-735, and Ser-738. Thr-742 bears the Phosphothreonine mark. Ser-749 is modified (phosphoserine). A Phosphothreonine modification is found at Thr-751. The segment covering Pro-761 to Leu-771 has biased composition (polar residues). Phosphoserine occurs at positions 777 and 781. A compositionally biased stretch (low complexity) spans Ser-777 to Arg-787. Thr-782 carries the phosphothreonine modification. Phosphoserine occurs at positions 788, 836, 845, 919, and 947. Positions Pro-959–Pro-982 are enriched in polar residues. Phosphoserine occurs at positions 984 and 995. A compositionally biased stretch (polar residues) spans Gln-1047–Gln-1073. A phosphoserine mark is found at Ser-1086 and Ser-1117. Over residues Gly-1159 to Ser-1168 the composition is skewed to low complexity. Gly residues predominate over residues Leu-1169–Thr-1178. The span at Gly-1272–Gly-1295 shows a compositional bias: pro residues. Residue Arg-1375 is modified to Asymmetric dimethylarginine. 2 stretches are compositionally biased toward low complexity: residues Ser-1377 to Pro-1390 and Thr-1400 to Pro-1409. Residues Arg-1432 and Arg-1438 each carry the asymmetric dimethylarginine modification.

As to quaternary structure, associates with the RNA polymerase II complex.

This is Regulation of nuclear pre-mRNA domain-containing protein 2 (Rprd2) from Mus musculus (Mouse).